We begin with the raw amino-acid sequence, 29 residues long: L-serine dehydratase, beta chain (29 aa).

This sequence belongs to the iron-sulfur dependent L-serine dehydratase family. As to quaternary structure, heterodimer of an alpha chain and a beta chain. It depends on [4Fe-4S] cluster as a cofactor.

The catalysed reaction is L-serine = pyruvate + NH4(+). Its pathway is carbohydrate biosynthesis; gluconeogenesis. The sequence is that of L-serine dehydratase, beta chain from Anaerotignum propionicum (Clostridium propionicum).